The following is a 795-amino-acid chain: Serine/threonine-protein kinase MARK1 (795 aa).

The tract at residues 1–41 (MSARTPLPTVNERDTENHTSVDGYTETHIPPAKSSSRQNLP) is disordered. At Thr5 the chain carries Phosphothreonine. In terms of domain architecture, Protein kinase spans 60–311 (YRLQKTIGKG…LEQIMKDRWM (252 aa)). ATP contacts are provided by residues 66-74 (IGKGNFAKV) and Lys89. Asp182 acts as the Proton acceptor in catalysis. Phosphothreonine is present on Thr208. Thr215 is subject to Phosphothreonine; by LKB1 and TAOK1. Residue Ser219 is modified to Phosphoserine; by GSK3-beta. One can recognise a UBA domain in the interval 329–370 (DLSDAKRIDIMVTMGFARDEINDALVSQKYDEVMATYILLGR). Disordered regions lie at residues 377–498 (GGES…SGGS) and 518–699 (QNGR…KPRS). Phosphoserine is present on residues Ser382, Ser390, Ser393, Ser403, Ser423, and Ser444. Over residues 387 to 403 (CQRSRPSSDLNNSTLQS) the composition is skewed to polar residues. Basic and acidic residues predominate over residues 447-459 (SEQKEEWGKDTAR). Over residues 462–473 (GSTTVGSKSEVT) the composition is skewed to polar residues. Residue Ser475 is modified to Phosphoserine. The segment covering 486 to 495 (TASPSNNVYS) has biased composition (polar residues). 2 stretches are compositionally biased toward low complexity: residues 523-547 (SSLT…GPSA) and 585-599 (PAAS…ASTP). Ser588 is modified (phosphoserine). Thr613 carries the post-translational modification Phosphothreonine; by PKC/PRKCZ. Positions 647–657 (GTSTGIISKIT) are enriched in polar residues. Basic and acidic residues-rich tracts occupy residues 661–676 (VRRD…RADT) and 683–697 (DPKE…EAKP). Ser666 carries the post-translational modification Phosphoserine. Residues 746 to 795 (DARQDSLVQWEMEVCKLPRLSLNGVRFKRISGTSIAFKNIASKIANELKL) form the KA1 domain.

The protein belongs to the protein kinase superfamily. CAMK Ser/Thr protein kinase family. SNF1 subfamily. As to quaternary structure, interacts with MAPT/TAU. Requires Mg(2+) as cofactor. Post-translationally, phosphorylated at Thr-215 by STK11/LKB1 in complex with STE20-related adapter-alpha (STRADA) pseudo kinase and CAB39. Phosphorylation at Thr-215 by TAOK1 activates the kinase activity, leading to phosphorylation and detachment of MAPT/TAU from microtubules. Phosphorylation at Ser-219 by GSK3-beta (GSK3B) inhibits the kinase activity. Phosphorylation at Thr-613 by PRKCZ/aPKC in polarized epithelial cells inhibits the kinase activity.

The protein localises to the cell membrane. Its subcellular location is the cytoplasm. The protein resides in the cytoskeleton. It localises to the cell projection. It is found in the dendrite. It carries out the reaction L-seryl-[protein] + ATP = O-phospho-L-seryl-[protein] + ADP + H(+). The enzyme catalyses L-threonyl-[protein] + ATP = O-phospho-L-threonyl-[protein] + ADP + H(+). It catalyses the reaction L-seryl-[tau protein] + ATP = O-phospho-L-seryl-[tau protein] + ADP + H(+). The catalysed reaction is L-threonyl-[tau protein] + ATP = O-phospho-L-threonyl-[tau protein] + ADP + H(+). Its activity is regulated as follows. Inhibited by phosphorylation at Ser-219. Activated by phosphorylation on Thr-215. In terms of biological role, serine/threonine-protein kinase. Involved in cell polarity and microtubule dynamics regulation. Phosphorylates DCX, MAP2 and MAP4. Phosphorylates the microtubule-associated protein MAPT/TAU. Involved in cell polarity by phosphorylating the microtubule-associated proteins MAP2, MAP4 and MAPT/TAU at KXGS motifs, causing detachment from microtubules, and their disassembly. Involved in the regulation of neuronal migration through its dual activities in regulating cellular polarity and microtubule dynamics, possibly by phosphorylating and regulating DCX. Also acts as a positive regulator of the Wnt signaling pathway, probably by mediating phosphorylation of dishevelled proteins (DVL1, DVL2 and/or DVL3). This Mus musculus (Mouse) protein is Serine/threonine-protein kinase MARK1.